Reading from the N-terminus, the 156-residue chain is Snaclec trimecetin subunit alpha (156 aa).

The N-terminal stretch at 1 to 23 (MGRFIFVSFGLLVVFLSLSGTGA) is a signal peptide. Intrachain disulfides connect Cys-25–Cys-36, Cys-53–Cys-150, and Cys-125–Cys-142. In terms of domain architecture, C-type lectin spans 32-151 (FRRYCYKPFK…CGERNLFMCK (120 aa)).

Belongs to the snaclec family. Heterodimer of subunits alpha and beta; disulfide-linked. Expressed by the venom gland.

It localises to the secreted. Functionally, snaclec that induces platelet aggregation in either human platelet rich plasma (PRP) or washed platelet suspensions. It causes aggregation in a dose-dependent manner even in the absence of various platelet agonists such as ADP or von Willebrand factor (vWF). Interestingly, it does not induce aggregation in rabbit PRP. A monoclonal antibody against the platelet GPIb receptor blocks the aggregation induced by trimecetin, suggesting that it acts by binding to GPIb (GP1BA/GP1BB). This Protobothrops mucrosquamatus (Taiwan habu) protein is Snaclec trimecetin subunit alpha.